A 1084-amino-acid polypeptide reads, in one-letter code: MAGNEWINGYLEAILDSGGAAGGGGGGGGGGGGGGGGGGGGGGGGVDPRSPAAGAASPRGPHMNFNPTHYFVEEVVKGVDESDLHRTWIKVVATRNARERSTRLENMCWRIWHLARKKKQLELEGILRISARRKEQEQVRRETSEDLAEDLFEGEKADTVGELAQQDTPMKKKFQRNFSELTVSWSDENKEKKLYIVLISLHGLVRGDNMELGRDSDTGGQVKYVVELARALAMMPGVYRVDLFTRQVSSPEVDWSYGEPTEMLTSGSTDGEGSGESAGAYIVRIPCGPRDKYLRKEALWPYLQEFVDGALAHILNMSKALGEQVSNGKLVLPYVIHGHYADAGDVAALLSGALNVPMVLTGHSLGRNKLEQIMKQGRMSKEEIDSTYKIMRRIEGEELALDAAELVITSTRQEIDEQWGLYDGFDVKLEKVLRARARRGVSCHGRFMPRMVVIPPGMDFSSVVVPEDTSDGDDGKDFEIASPRSLPPIWAEVMRFLTNPHKPMILALSRPDPKKNITTLVKAFGECRPLRELANLILIMGNRDDIDEMSAGNASVLTTVLKLIDKYDLYGSVAFPKHHKQSDVPEIYRLTGKMKGVFINPALVEPFGLTLIEAAAHGLPIVATKNGGPVDIKNALNNGLLVDPHDQHAIADALLKLVADKNLWQECRKNGLRNIQLYSWPEHCRTYLTRIAGCRIRNPRWLMDTPADAAAEEEEALEDSLMDVQDLSLRLSIDGERGSSMNDAPSSDPQDSVQRIMNKIKRSSPADTDGAKIPAEAAATATSGAMNKYPLLRRRRRLFVIAVDCYGDDGSASKRMLQVIQEVFRAVRSDSQMSRISGFALSTAMPLPETLKLLQLGKIPPTDFDALICGSGSEVYYPSTAQCVDAGGRLRPDQDYLLHINHRWSHDGAKQTIAKLAHDGSGTNVEPDVESCNPHCVSFFIKDPNKVRTIDEMRERVRMRGLRCHLMYCRNATRLQVVPLLASRSQALRYLFVRWGLSVGNMYLIVGEHGDTDHEEMLSGLHKTVIIRGVTEKGSEQLVRSSGSYQREDVVPSESPLIAFTKGDLKADEIMRALKEVTKAASGM.

Positions Gly-25–Val-46 are enriched in gly residues. The disordered stretch occupies residues Gly-25–Pro-61. Positions Pro-48–Pro-61 are enriched in low complexity.

Belongs to the glycosyltransferase 1 family. As to quaternary structure, homodimer or homotetramer. Expressed in leaves mesophyll cells, scutellum of germinating seedlings and pollen of immature inflorescences.

It carries out the reaction beta-D-fructose 6-phosphate + UDP-alpha-D-glucose = sucrose 6(F)-phosphate + UDP + H(+). It participates in glycan biosynthesis; sucrose biosynthesis; sucrose from D-fructose 6-phosphate and UDP-alpha-D-glucose: step 1/2. Its activity is regulated as follows. Activity is regulated by phosphorylation and moderated by concentration of metabolites and light. In terms of biological role, plays a role in photosynthetic sucrose synthesis by catalyzing the rate-limiting step of sucrose biosynthesis from UDP-glucose and fructose- 6-phosphate. Involved in the regulation of carbon partitioning in the leaves of plants. May regulate the synthesis of sucrose and therefore play a major role as a limiting factor in the export of photoassimilates out of the leaf. Plays a role for sucrose availability that is essential for plant growth and fiber elongation. The chain is Probable sucrose-phosphate synthase 1 (SPS1) from Oryza sativa subsp. indica (Rice).